A 122-amino-acid chain; its full sequence is MIQQESQLKVADNTGAKKVKCFKVLGGSRRRYATVGDVIVCSVRDIEPDSSVKKGDVVKAVIVRTRNDIHRKDGSTLRFDTNSCVIIDDKGNPKGTRIFGPVAREIRDRGFVKISSLAPEVI.

The protein belongs to the universal ribosomal protein uL14 family. In terms of assembly, part of the 50S ribosomal subunit. Forms a cluster with proteins L3 and L19. In the 70S ribosome, L14 and L19 interact and together make contacts with the 16S rRNA in bridges B5 and B8.

In terms of biological role, binds to 23S rRNA. Forms part of two intersubunit bridges in the 70S ribosome. The sequence is that of Large ribosomal subunit protein uL14 from Chlamydia trachomatis serovar L2 (strain ATCC VR-902B / DSM 19102 / 434/Bu).